The sequence spans 196 residues: Glycerol-3-phosphate acyltransferase 2 (196 aa).

The next 5 helical transmembrane spans lie at 2–22, 52–72, 80–100, 112–132, and 137–156; these read GWWL…SYLI, VGGI…FITI, IVSL…FMKF, IIFC…LVIV, and YASL…GYLL.

It belongs to the PlsY family. As to quaternary structure, probably interacts with PlsX.

The protein resides in the cell inner membrane. The catalysed reaction is an acyl phosphate + sn-glycerol 3-phosphate = a 1-acyl-sn-glycero-3-phosphate + phosphate. It functions in the pathway lipid metabolism; phospholipid metabolism. Its function is as follows. Catalyzes the transfer of an acyl group from acyl-phosphate (acyl-PO(4)) to glycerol-3-phosphate (G3P) to form lysophosphatidic acid (LPA). This enzyme utilizes acyl-phosphate as fatty acyl donor, but not acyl-CoA or acyl-ACP. The chain is Glycerol-3-phosphate acyltransferase 2 from Thermotoga maritima (strain ATCC 43589 / DSM 3109 / JCM 10099 / NBRC 100826 / MSB8).